A 491-amino-acid chain; its full sequence is Probable malate:quinone oxidoreductase (491 aa).

The protein belongs to the MQO family. The cofactor is FAD.

It carries out the reaction (S)-malate + a quinone = a quinol + oxaloacetate. The protein operates within carbohydrate metabolism; tricarboxylic acid cycle; oxaloacetate from (S)-malate (quinone route): step 1/1. The sequence is that of Probable malate:quinone oxidoreductase from Leifsonia xyli subsp. xyli (strain CTCB07).